Here is a 441-residue protein sequence, read N- to C-terminus: Cysteine desulfurase, mitosomal (441 aa).

Pyridoxal 5'-phosphate contacts are provided by residues 107–108 (AT), asparagine 189, glutamine 217, and 237–239 (SGH). At lysine 240 the chain carries N6-(pyridoxal phosphate)lysine. Threonine 277 lines the pyridoxal 5'-phosphate pocket. Cysteine 367 serves as the catalytic Cysteine persulfide intermediate. Cysteine 367 lines the [2Fe-2S] cluster pocket.

The protein belongs to the class-V pyridoxal-phosphate-dependent aminotransferase family. NifS/IscS subfamily. As to quaternary structure, interacts with ISD11. It depends on pyridoxal 5'-phosphate as a cofactor.

Its subcellular location is the mitosome. The enzyme catalyses (sulfur carrier)-H + L-cysteine = (sulfur carrier)-SH + L-alanine. Its function is as follows. Catalyzes the removal of elemental sulfur from cysteine to produce alanine. It supplies the inorganic sulfur for iron-sulfur (Fe-S) clusters in mitosomes. The protein is Cysteine desulfurase, mitosomal of Trachipleistophora hominis (Microsporidian parasite).